Reading from the N-terminus, the 592-residue chain is Guanylate-binding protein 1 (592 aa).

Residues 1 to 311 form a GTPase domain (Globular) region; sequence MASEIHMTGP…NAISSGDLPC (311 aa). The GB1/RHD3-type G domain occupies 35–278; the sequence is TQPMVVVAIV…FCSYIFSNSK (244 aa). GTP is bound by residues 45–52, 67–69, and 97–101; these read GLYRTGKS, LGS, and DTEGL. The residue at position 156 (S156) is a Phosphoserine; by PIM1. (Microbial infection) Glycyl lysine isopeptide (Lys-Gly) (interchain with G-Cter in ubiquitin) cross-links involve residues K207, K209, K210, K382, K562, K567, K573, and K587. Residue C589 is modified to Cysteine methyl ester. C589 carries S-farnesyl cysteine lipidation. T590 is modified (phosphothreonine; by PIM1). Residues 590-592 constitute a propeptide, removed in mature form; sequence TIS.

Belongs to the TRAFAC class dynamin-like GTPase superfamily. GB1/RHD3 GTPase family. GB1 subfamily. Homodimer; homodimerization occurs upon GTP-binding and is required for the second hydrolysis step from GDP to GMP. Undergoes conformational changes and oligomerization upon GTP-binding and hydrolysis. Heterodimer with other family members, including GBP2, GBP3, GBP4 and GBP5. Dimerization regulates subcellular location to membranous structures. Interacts with SQSTM1. Interacts (when phosphorylated) with 14-3-3 protein sigma (SFN); leading to GBP1 retention in the cytosol and inactivation. Post-translationally, isoprenylation is required for proper subcellular location. In terms of processing, phosphorylated at Ser-156 by PIM1 in absence of infection, inhibits GBP1: phosphorylation promotes interaction with 14-3-3 protein sigma (SFN), leading to GBP1 retention in the cytosol. Dephosphorylated in response to infection, liberating GBP1. (Microbial infection) Ubiquitinated by S.flexneri IpaH9.8, leading to its degradation by the proteasome, thereby preventing its ability to promote host defense against bacterial infection.

It is found in the cytoplasmic vesicle membrane. The protein localises to the golgi apparatus membrane. Its subcellular location is the cell membrane. The protein resides in the cytoplasm. It localises to the cytosol. It is found in the secreted. The catalysed reaction is GTP + H2O = GDP + phosphate + H(+). It carries out the reaction GDP + H2O = GMP + phosphate + H(+). Interferon (IFN)-inducible GTPase that plays important roles in innate immunity against a diverse range of bacterial, viral and protozoan pathogens. Hydrolyzes GTP to GMP in two consecutive cleavage reactions: GTP is first hydrolyzed to GDP and then to GMP in a processive manner. Following infection, recruited to the pathogen-containing vacuoles or vacuole-escaped bacteria and promotes both inflammasome assembly and autophagy. Acts as a positive regulator of inflammasome assembly by facilitating the detection of inflammasome ligands from pathogens. Involved in the lysis of pathogen-containing vacuoles, releasing pathogens into the cytosol. Following pathogen release in the cytosol, forms a protein coat in a GTPase-dependent manner that encapsulates pathogens and promotes the detection of ligands by pattern recognition receptors. Plays a key role in inflammasome assembly in response to infection by Gram-negative bacteria: following pathogen release in the cytosol, forms a protein coat that encapsulates Gram-negative bacteria and directly binds to lipopolysaccharide (LPS), disrupting the O-antigen barrier and unmasking lipid A that is that detected by the non-canonical inflammasome effector CASP4/CASP11. Also promotes recruitment of proteins that mediate bacterial cytolysis, leading to release double-stranded DNA (dsDNA) that activates the AIM2 inflammasome. Involved in autophagy by regulating bacteriolytic peptide generation via its interaction with ubiquitin-binding protein SQSTM1, which delivers monoubiquitinated proteins to autolysosomes for the generation of bacteriolytic peptides. Confers protection to several pathogens, including the bacterial pathogens L.monocytogenes and M.bovis BCG as well as the protozoan pathogen T.gondii. Exhibits antiviral activity against influenza virus. In Homo sapiens (Human), this protein is Guanylate-binding protein 1.